The following is a 1187-amino-acid chain: Roquin-2 (1187 aa).

Residues C14, C17, C33, H35, C38, C50, and D53 each coordinate Zn(2+). The RING-type; degenerate zinc finger occupies 14 to 54 (CPICYNEFDENVHKPISLGCSHTVCKTCLNKLHRKACPFDQ). The interval 91–170 (ENKHYEVAKK…RTVTELILQH (80 aa)) is HEPN-N. The interval 171-325 (QNPQQLSANL…SIIDKLQSPE (155 aa)) is ROQ. The interval 326 to 396 (SFAKSVQELT…GLVDFIQNYS (71 aa)) is HEPN-C. The C3H1-type zinc finger occupies 410–438 (KYKTSMCRDLRQQGGCPRGTNCTFAHSQE). Disordered regions lie at residues 527-571 (VGTN…GTEL) and 640-677 (NVPE…PPPQ). The segment covering 529 to 545 (TNAQNAGPSAESVSENK) has biased composition (polar residues). S548 bears the Phosphoserine mark. Over residues 553–571 (PVSNAAATSAGPSNFGTEL) the composition is skewed to polar residues. S806, S981, and S1115 each carry phosphoserine.

As to quaternary structure, interacts with EDC4. Interacts with CCR4-NOT deadenylase complex. Interacts with MAP3K5; the interaction is probably stimulus-dependent. In terms of processing, proteolytically cleaved by MALT1 in activated CD4(+) T cells; cleavage at Arg-509 is critical for promoting RC3H1 degradation in response to T-cell receptor (TCR) stimulation, and hence is necessary for prolonging the stability of a set of mRNAs controlling Th17 cell differentiation. As to expression, highest levels in lymph node and thymus and slightly lesser amounts in brain, lung, and spleen (at protein level). Very weak expression in heart, muscle, and kidney (at protein level). Expressed in CD4(+) helper T-cells (at protein level).

The protein resides in the cytoplasm. The protein localises to the P-body. It carries out the reaction S-ubiquitinyl-[E2 ubiquitin-conjugating enzyme]-L-cysteine + [acceptor protein]-L-lysine = [E2 ubiquitin-conjugating enzyme]-L-cysteine + N(6)-ubiquitinyl-[acceptor protein]-L-lysine.. It functions in the pathway protein modification; protein ubiquitination. With respect to regulation, binding to dsRNA, but not CDE RNA, crosstalks with the E3 ubiquitin ligase activity and may inhibit ubiquitination. Post-transcriptional repressor of mRNAs containing a conserved stem loop motif, called constitutive decay element (CDE), which is often located in the 3'-UTR, as in HMGXB3, ICOS, IER3, NFKBID, NFKBIZ, PPP1R10, TNF and in many more mRNAs. Binds to CDE and promotes mRNA deadenylation and degradation. This process does not involve miRNAs. In follicular helper T (Tfh) cells, represses of ICOS and TNFRSF4 expression, thus preventing spontaneous Tfh cell differentiation, germinal center B-cell differentiation in the absence of immunization and autoimmunity. In resting or LPS-stimulated macrophages, controls inflammation by suppressing TNF expression. Also recognizes CDE in its own mRNA and in that of paralogous RC3H1, possibly leading to feedback loop regulation. Inhibits cooperatively with ZC3H12A the differentiation of helper T cells Th17 in lungs. They repress target mRNA encoding the Th17 cell-promoting factors IL6, ICOS, REL, IRF4, NFKBID and NFKBIZ. The cooperation requires RNA-binding by RC3H1 and the nuclease activity of ZC3H12A. miRNA-binding protein that regulates microRNA homeostasis. Enhances DICER-mediated processing of pre-MIR146a but reduces mature MIR146a levels through an increase of 3' end uridylation. Both inhibits ICOS mRNA expression and they may act together to exert the suppression. Acts as a ubiquitin E3 ligase. Pairs with E2 enzymes UBE2B, UBE2D2, UBE2E2, UBE2E3, UBE2G2, UBE2K and UBE2Q2 and produces polyubiquitin chains. Shows the strongest activity when paired with UBE2N:UBE2V1 or UBE2N:UBE2V2 E2 complexes and generate both short and long polyubiquitin chains. Involved in the ubiquitination of MAP3K5. Able to interact with double-stranded RNA (dsRNA). This Mus musculus (Mouse) protein is Roquin-2 (Rc3h2).